The chain runs to 329 residues: MSRRVEYTLAPPQRNESDGFDYPDGIPISYNLHRLRHFECEGSYPKYPYGSLVKFYAMVGLHRYNVLEGKNLQLDTLKSFNMRINCGASSYYITLAARVPDSGLKQIFQVLVHEERLGSLDMTCTIARPRVTTNVPFLRPHSESEYDYMDNDELPDWPSEIAFDDTKRFHLVKESELRDNDWIRLYLELTLVAHDRFLTVHYLSQLEIVKVAIEEVEQPNASLNTKTTFVYITYKDLAKAQIGEPVDRKAIVRKIINETTGLLRLRGDYWSGERSVITPEEEYMLLHGGEKVRNNEQRSKKLKRRVGVHRLWRWWYQAYKNRGLRSSSY.

The protein belongs to the UPF0725 (EMB2204) family.

In terms of biological role, may be involved in embryogenesis. In Arabidopsis thaliana (Mouse-ear cress), this protein is UPF0725 protein EMB2204 (EMB2204).